The sequence spans 156 residues: MSRKGHIKKRDVQPDPVYNSKLVTKIINIIMEDGKKGKAQTIFYQALKQVKTITNREPIKVFHEALNNIMPVLEVRTRRMGGQNYQVPSEVRPERRQSLGLRWIVKYTKESNEKTMEERLAKEIVDASLGNGVLVKKREETHRMAEANKAFAHYRW.

It belongs to the universal ribosomal protein uS7 family. In terms of assembly, part of the 30S ribosomal subunit. Contacts proteins S9 and S11.

Functionally, one of the primary rRNA binding proteins, it binds directly to 16S rRNA where it nucleates assembly of the head domain of the 30S subunit. Is located at the subunit interface close to the decoding center, probably blocks exit of the E-site tRNA. The polypeptide is Small ribosomal subunit protein uS7 (Onion yellows phytoplasma (strain OY-M)).